We begin with the raw amino-acid sequence, 872 residues long: MAEEKGGKQVLEESAFEEMERDFQGVLHELSGDKSLEKFRIEYERLHAVMKKSYDNEKRLMAKCRELNAEIVVNSAKVATALKLSQDDQTTIASLKKEIEKAWKMVDSAYDKEQKAKETILALKEEIVNLTKLVEQGSGLSMDQHSNIRDLLRFKEEVTKERDQLLSEVVKLRESLAQTTEQQQETERSKEEAEHAISQFQQEIQQRQNEASREFRKKEKLEKELKQIQADMDSRQTEIKALQQYVQKSKEELQKLEQQLKEQKILNERAAKELEQFQMRNAKLQQENEQHSLVCEQLSQENQQKALELKAKEEEVHQMRLDIGKLNKIREQIHKKLHHTEDQKAEVEQHKETLKNQIVGLEREVEASKKQAELDRKAMDELLRERDILNKNMLKAVNATQKQTDLVKLHEQAKRNLEGEIQNYKDEAQKQRKIIFHLEKERDRYINQASDLTQKVLMNMEDIKVRETQIFDYRKKIAESEIKLKQQQNLYEAVRSDRNLYSKNLVEAQDEITDMKRKLKIMIHQVDELKEDISAKESALVKLHLEQQRIEKEKETLKAELQKLRQQALETKHFIEKQEAEERKLLRIIAEADGERLRQKKELDQVISERDILGSQLVRRNDELALLYEKIKIQQSVLNKGESQYNQRLEDMRILRLEIKKLRREKGILARSMANVEELRQEFFHMQRELLKERTRCRALEEELENPLNVHRWRKLEASDPNAYELIQKIHTLQKRLISKTEEVVEKELLLQEKEKLYMELKHVLARQPGPEAAEQLKLYRRTLHDKKQQLKVLSSELNMYEVQSKEYKYEVEKLTNELQNLKKKYLAQKRKEQLQKNKDTAPMDNTFLMVKPNGPGFTGGGFPLRSTKMTF.

Coiled-coil stretches lie at residues 106-595 (VDSA…ADGE) and 642-839 (ESQY…QKNK).

This sequence belongs to the CFAP58 family. As to quaternary structure, interacts with ODFP2.

It is found in the cell projection. Its subcellular location is the cilium. The protein localises to the flagellum. It localises to the cytoplasm. The protein resides in the cytoskeleton. It is found in the microtubule organizing center. Its subcellular location is the centrosome. Functionally, has an essential role in the assembly and organization of the sperm flagellar axoneme. Required for the elongation of the primary cilium and sperm flagellar midpiece via modulation of the Notch signaling pathway. This is Cilia- and flagella-associated protein 58 from Homo sapiens (Human).